Consider the following 294-residue polypeptide: Nucleotide-binding protein LVIS_0651 (294 aa).

Residue 12-19 (GMSGAGKT) coordinates ATP. 62–65 (DLRS) lines the GTP pocket.

Belongs to the RapZ-like family.

In terms of biological role, displays ATPase and GTPase activities. This is Nucleotide-binding protein LVIS_0651 from Levilactobacillus brevis (strain ATCC 367 / BCRC 12310 / CIP 105137 / JCM 1170 / LMG 11437 / NCIMB 947 / NCTC 947) (Lactobacillus brevis).